The following is a 350-amino-acid chain: Biotin synthase (350 aa).

One can recognise a Radical SAM core domain in the interval Asn-38–Ser-257. [4Fe-4S] cluster-binding residues include Cys-53, Cys-57, and Cys-60. 4 residues coordinate [2Fe-2S] cluster: Cys-97, Cys-128, Cys-188, and Arg-260.

This sequence belongs to the radical SAM superfamily. Biotin synthase family. As to quaternary structure, homodimer. The cofactor is [4Fe-4S] cluster. [2Fe-2S] cluster serves as cofactor.

It carries out the reaction (4R,5S)-dethiobiotin + (sulfur carrier)-SH + 2 reduced [2Fe-2S]-[ferredoxin] + 2 S-adenosyl-L-methionine = (sulfur carrier)-H + biotin + 2 5'-deoxyadenosine + 2 L-methionine + 2 oxidized [2Fe-2S]-[ferredoxin]. It functions in the pathway cofactor biosynthesis; biotin biosynthesis; biotin from 7,8-diaminononanoate: step 2/2. Functionally, catalyzes the conversion of dethiobiotin (DTB) to biotin by the insertion of a sulfur atom into dethiobiotin via a radical-based mechanism. This chain is Biotin synthase, found in Photobacterium profundum (strain SS9).